The sequence spans 124 residues: Small ribosomal subunit protein uS12cy (124 aa).

The protein belongs to the universal ribosomal protein uS12 family. Part of the 30S ribosomal subunit.

It localises to the plastid. Its subcellular location is the chloroplast. Functionally, with S4 and S5 plays an important role in translational accuracy. Located at the interface of the 30S and 50S subunits. This is Small ribosomal subunit protein uS12cy (rps12-B) from Olimarabidopsis pumila (Dwarf rocket).